Consider the following 212-residue polypeptide: Cytidylate kinase (212 aa).

7 to 15 (GPAASGKGT) contacts ATP.

This sequence belongs to the cytidylate kinase family. Type 1 subfamily.

The protein localises to the cytoplasm. The enzyme catalyses CMP + ATP = CDP + ADP. It carries out the reaction dCMP + ATP = dCDP + ADP. The chain is Cytidylate kinase from Bradyrhizobium sp. (strain ORS 278).